The chain runs to 80 residues: Large ribosomal subunit protein uL24 (80 aa).

The interval 53–80 (HMRPTQSNPQGSIIEREFPIHASNVKKS) is disordered.

The protein belongs to the universal ribosomal protein uL24 family. In terms of assembly, part of the 50S ribosomal subunit.

Functionally, one of two assembly initiator proteins, it binds directly to the 5'-end of the 23S rRNA, where it nucleates assembly of the 50S subunit. In terms of biological role, one of the proteins that surrounds the polypeptide exit tunnel on the outside of the subunit. The sequence is that of Large ribosomal subunit protein uL24 from Chlorobium luteolum (strain DSM 273 / BCRC 81028 / 2530) (Pelodictyon luteolum).